The sequence spans 291 residues: Protein pxr1 (291 aa).

The span at 1–11 shows a compositional bias: basic residues; sequence MGLAAPRKRTK. Disordered regions lie at residues 1 to 26 and 146 to 268; these read MGLA…RSTD and LVPP…FRGR. Composition is skewed to polar residues over residues 15-25 and 146-156; these read DPNNTTWSRST and LVPPTSQNGQA. Positions 25-79 constitute a G-patch domain; that stretch reads TDGFGHRILKAQGWTPGSFLGPRNAAHSDLFTTASASHIRVVLKDDNLGLGARPK. A compositionally biased stretch (basic and acidic residues) spans 194–205; that stretch reads ETNSRGSREKER. Residues 206–219 show a composition bias toward basic residues; the sequence is KREKRQMRRDKKRK. A compositionally biased stretch (basic and acidic residues) spans 230 to 247; that stretch reads MQEKTRVQGPSEDVKPTE.

The protein belongs to the PINX1 family.

Its subcellular location is the nucleus. The protein localises to the nucleolus. Involved in rRNA-processing at A0, A1 and A2 sites and negatively regulates telomerase. The protein is Protein pxr1 (pxr1) of Aspergillus clavatus (strain ATCC 1007 / CBS 513.65 / DSM 816 / NCTC 3887 / NRRL 1 / QM 1276 / 107).